The chain runs to 324 residues: MFAHRSFSLLCRRSAVTSWRSQSHTAGKRLDISGIYPPIATPFTEPEDVDYQKLDDNIRKYGRLPFRGLVVQGSNGEYPYLTAEERVEVVKRVKQALPKDKLVMAGSGCESTRATIQMSQRMADAGADCVLVVTPCFYRGRMDSRALINHYSKVADSCSVPVVLYSVPANTGLDLPVDAVIQLSKHPNIVGLKDSGGDITRIALMVQKTRSQDFQVLAGSAGFLMAAYAVGAVGGVCALANVLGQQVCELAQLCVSGRWDEAKELQYRLIEPNTAVTRGFGVPALKLAMDWFGYHGGICRSPLQPLSKADLEALRGKFSSNGWL.

A mitochondrion-targeting transit peptide spans Met1–Gln22. Residue Ser74–Asn75 participates in substrate binding. The active-site Schiff-base intermediate with substrate is the Lys193. Residues Ser195 and Gly219 each coordinate substrate.

It belongs to the DapA family. As to quaternary structure, homotetramer.

Its subcellular location is the mitochondrion. It catalyses the reaction (4S)-4-hydroxy-2-oxoglutarate = glyoxylate + pyruvate. The catalysed reaction is (4R)-4-hydroxy-2-oxoglutarate = glyoxylate + pyruvate. Its activity is regulated as follows. Inhibited by divalent cations. Functionally, catalyzes the final step in the metabolic pathway of hydroxyproline. The sequence is that of 4-hydroxy-2-oxoglutarate aldolase, mitochondrial from Danio rerio (Zebrafish).